We begin with the raw amino-acid sequence, 424 residues long: UDP-N-acetylglucosamine 1-carboxyvinyltransferase (424 aa).

22–23 contributes to the phosphoenolpyruvate binding site; sequence KN. Residue Arg-93 participates in UDP-N-acetyl-alpha-D-glucosamine binding. Residue Cys-117 is the Proton donor of the active site. Cys-117 carries the 2-(S-cysteinyl)pyruvic acid O-phosphothioketal modification. Residues 122–126, 162–165, Asp-307, and Ile-329 each bind UDP-N-acetyl-alpha-D-glucosamine; these read RPVDL and KVSV.

Belongs to the EPSP synthase family. MurA subfamily.

Its subcellular location is the cytoplasm. It catalyses the reaction phosphoenolpyruvate + UDP-N-acetyl-alpha-D-glucosamine = UDP-N-acetyl-3-O-(1-carboxyvinyl)-alpha-D-glucosamine + phosphate. Its pathway is cell wall biogenesis; peptidoglycan biosynthesis. Functionally, cell wall formation. Adds enolpyruvyl to UDP-N-acetylglucosamine. The protein is UDP-N-acetylglucosamine 1-carboxyvinyltransferase of Haemophilus influenzae (strain PittGG).